Here is a 65-residue protein sequence, read N- to C-terminus: MPSVNVRDMDSFEAALKMFKKQCEREGILSEIKKREHYEKPSVKRKKKVLAARKKLAKKMKMLSR.

Belongs to the bacterial ribosomal protein bS21 family.

In Thermodesulfovibrio yellowstonii (strain ATCC 51303 / DSM 11347 / YP87), this protein is Small ribosomal subunit protein bS21.